An 88-amino-acid polypeptide reads, in one-letter code: ATPase inhibitor mai-1, mitochondrial (88 aa).

Positions 1–18 (MSGSGSGSGAGHGGGSGG) are enriched in gly residues. Residues 1 to 41 (MSGSGSGSGAGHGGGSGGSIREAGGSLGMMGATREEEYFRR) are disordered. Residues 39 to 87 (FRRQQKDQLDNLKKKLEADMTQSQQEIRDHEKVLEQHQQRLKEIEKGHG) adopt a coiled-coil conformation.

The protein belongs to the ATPase inhibitor family. Post-translationally, does not seem to include a transit peptide.

Its subcellular location is the mitochondrion. In terms of biological role, thought to be a regulatory component of the ATP-synthesizing complex in the mitochondria. In Caenorhabditis elegans, this protein is ATPase inhibitor mai-1, mitochondrial (mai-1).